A 284-amino-acid polypeptide reads, in one-letter code: NAD kinase (284 aa).

Asp61 serves as the catalytic Proton acceptor. NAD(+) is bound by residues 61–62, Arg66, 136–137, Arg147, Lys164, Asp166, and Leu201; these read DG and ND.

It belongs to the NAD kinase family. It depends on a divalent metal cation as a cofactor.

It localises to the cytoplasm. It carries out the reaction NAD(+) + ATP = ADP + NADP(+) + H(+). Its function is as follows. Involved in the regulation of the intracellular balance of NAD and NADP, and is a key enzyme in the biosynthesis of NADP. Catalyzes specifically the phosphorylation on 2'-hydroxyl of the adenosine moiety of NAD to yield NADP. The polypeptide is NAD kinase (Dehalococcoides mccartyi (strain ATCC BAA-2100 / JCM 16839 / KCTC 5957 / BAV1)).